Consider the following 245-residue polypeptide: MKVEDYFHDILGERKIHLTLIDPEEQTPEEAVEIAEAAIRGGTDGIMLGGSTTDSSELDATAGALRENIDVPIILFPGNTTGVSRHADAIFFMSLLNSNNPYWIIGAQALGAPAVKKMGIEALPMGYLVVEPGGTVGWVGDTKPVPRNKPDIAAAYAMAAEFLGMRLFYLEAGSGAPQHVPEEMISLVKRCTDQILIVGGGIRTGADAARVAGAGADIIVTGTVVENSSNVEDKIREIVEGMGSL.

The Mg(2+) site is built by Asp-22 and Ser-51. Sn-glycerol 1-phosphate-binding positions include 169 to 175 (YLEAGSG), 200 to 201 (GG), and 222 to 223 (GT).

This sequence belongs to the GGGP/HepGP synthase family. Group II subfamily. Homopentamer. It depends on Mg(2+) as a cofactor.

It is found in the cytoplasm. The catalysed reaction is sn-glycerol 1-phosphate + (2E,6E,10E)-geranylgeranyl diphosphate = sn-3-O-(geranylgeranyl)glycerol 1-phosphate + diphosphate. The protein operates within membrane lipid metabolism; glycerophospholipid metabolism. Its activity is regulated as follows. Inhibited by EDTA in vitro. In terms of biological role, prenyltransferase that catalyzes the transfer of the geranylgeranyl moiety of geranylgeranyl diphosphate (GGPP) to the C3 hydroxyl of sn-glycerol-1-phosphate (G1P). This reaction is the first ether-bond-formation step in the biosynthesis of archaeal membrane lipids. Cannot use sn-glycerol-3-phosphate (G3P) or dihydroxyacetonephosphate (DHAP) as substrate. This chain is Geranylgeranylglyceryl phosphate synthase, found in Methanothermobacter marburgensis (strain ATCC BAA-927 / DSM 2133 / JCM 14651 / NBRC 100331 / OCM 82 / Marburg) (Methanobacterium thermoautotrophicum).